The sequence spans 332 residues: Ketol-acid reductoisomerase (NADP(+)) (332 aa).

The 182-residue stretch at 1–182 folds into the KARI N-terminal Rossmann domain; that stretch reads MAVIYYDKDC…GSNRAGILET (182 aa). NADP(+) contacts are provided by residues 25–28 and 83–86; these read YGAQ and DTSQ. His-108 is a catalytic residue. Position 134 (Gly-134) interacts with NADP(+). Residues 183 to 328 form the KARI C-terminal knotted domain; the sequence is TFAEETETDL…AELRSMMSWL (146 aa). Mg(2+) is bound by residues Asp-191, Glu-195, Glu-227, and Glu-231. Ser-252 lines the substrate pocket.

The protein belongs to the ketol-acid reductoisomerase family. Mg(2+) serves as cofactor.

The catalysed reaction is (2R)-2,3-dihydroxy-3-methylbutanoate + NADP(+) = (2S)-2-acetolactate + NADPH + H(+). The enzyme catalyses (2R,3R)-2,3-dihydroxy-3-methylpentanoate + NADP(+) = (S)-2-ethyl-2-hydroxy-3-oxobutanoate + NADPH + H(+). It participates in amino-acid biosynthesis; L-isoleucine biosynthesis; L-isoleucine from 2-oxobutanoate: step 2/4. It functions in the pathway amino-acid biosynthesis; L-valine biosynthesis; L-valine from pyruvate: step 2/4. In terms of biological role, involved in the biosynthesis of branched-chain amino acids (BCAA). Catalyzes an alkyl-migration followed by a ketol-acid reduction of (S)-2-acetolactate (S2AL) to yield (R)-2,3-dihydroxy-isovalerate. In the isomerase reaction, S2AL is rearranged via a Mg-dependent methyl migration to produce 3-hydroxy-3-methyl-2-ketobutyrate (HMKB). In the reductase reaction, this 2-ketoacid undergoes a metal-dependent reduction by NADPH to yield (R)-2,3-dihydroxy-isovalerate. This Dehalococcoides mccartyi (strain ATCC BAA-2100 / JCM 16839 / KCTC 5957 / BAV1) protein is Ketol-acid reductoisomerase (NADP(+)).